A 154-amino-acid polypeptide reads, in one-letter code: Transcriptional repressor NrdR (154 aa).

A zinc finger lies at 3 to 34; it reads CPTCQYNGTRVVDSRPADDGNSIRRRRECEKC. Residues 49-139 form the ATP-cone domain; it reads LIVVKKDGAR…VYRQFKDISV (91 aa).

It belongs to the NrdR family. Zn(2+) serves as cofactor.

Its function is as follows. Negatively regulates transcription of bacterial ribonucleotide reductase nrd genes and operons by binding to NrdR-boxes. The polypeptide is Transcriptional repressor NrdR (Listeria monocytogenes serotype 4a (strain HCC23)).